The chain runs to 296 residues: MALRQCAIYGKGGIGKSTTTQNLVAGLAEAGNKIMIVGCDPKADSTRLILHAKAQNTIMEMAAQAGSVEDLELEDVLKAGFGGIKCVESGGPEPGVGCAGRGVITAINFLEEEGAYEEDLDFVFYDVLGDVVCGGFAMPIRQNKAQEIYIVVSGEMMAMYAANNIAKGIVKYASSGNVRLAGLICNSRNVDREDELIEALAAALGTQMIHFVPRDNVVQRAEIRRMTVIEYDPKSKQADEYRTLSNKIYNNKNFVVPTPLTMDELEDLLMKYGMMEEEDETIVGKTAEEEAAAATA.

Residue 10-17 (GKGGIGKS) participates in ATP binding. Cys98 contacts [4Fe-4S] cluster. Arg101 is subject to ADP-ribosylarginine; by dinitrogenase reductase ADP-ribosyltransferase. Cys133 contacts [4Fe-4S] cluster.

It belongs to the NifH/BchL/ChlL family. Homodimer. It depends on [4Fe-4S] cluster as a cofactor. In terms of processing, the reversible ADP-ribosylation of Arg-101 inactivates the nitrogenase reductase and regulates nitrogenase activity.

It catalyses the reaction N2 + 8 reduced [2Fe-2S]-[ferredoxin] + 16 ATP + 16 H2O = H2 + 8 oxidized [2Fe-2S]-[ferredoxin] + 2 NH4(+) + 16 ADP + 16 phosphate + 6 H(+). In terms of biological role, the key enzymatic reactions in nitrogen fixation are catalyzed by the nitrogenase complex, which has 2 components: the iron protein and the molybdenum-iron protein. This Magnetococcus marinus (strain ATCC BAA-1437 / JCM 17883 / MC-1) protein is Nitrogenase iron protein.